We begin with the raw amino-acid sequence, 695 residues long: Threonine--tRNA ligase (695 aa).

The region spanning 1 to 76 is the TGS domain; sequence MPRIPSPPQA…TTTDVVEPVT (76 aa). The segment at 279–585 is catalytic; sequence DHRKLGVELD…LLEHHAGAFP (307 aa). Residues cysteine 384, histidine 435, and histidine 562 each contribute to the Zn(2+) site.

The protein belongs to the class-II aminoacyl-tRNA synthetase family. As to quaternary structure, homodimer. It depends on Zn(2+) as a cofactor.

The protein resides in the cytoplasm. It catalyses the reaction tRNA(Thr) + L-threonine + ATP = L-threonyl-tRNA(Thr) + AMP + diphosphate + H(+). In terms of biological role, catalyzes the attachment of threonine to tRNA(Thr) in a two-step reaction: L-threonine is first activated by ATP to form Thr-AMP and then transferred to the acceptor end of tRNA(Thr). Also edits incorrectly charged L-seryl-tRNA(Thr). In Leifsonia xyli subsp. xyli (strain CTCB07), this protein is Threonine--tRNA ligase.